Consider the following 43-residue polypeptide: Truncated K3L homolog (43 aa).

Belongs to the orthopoxvirus OPG041 family.

This chain is Truncated K3L homolog (OPG041), found in Cynomys gunnisoni (Gunnison's prairie dog).